We begin with the raw amino-acid sequence, 257 residues long: Imidazole glycerol phosphate synthase subunit HisF (257 aa).

Catalysis depends on residues aspartate 12 and aspartate 131.

The protein belongs to the HisA/HisF family. In terms of assembly, heterodimer of HisH and HisF.

It localises to the cytoplasm. The enzyme catalyses 5-[(5-phospho-1-deoxy-D-ribulos-1-ylimino)methylamino]-1-(5-phospho-beta-D-ribosyl)imidazole-4-carboxamide + L-glutamine = D-erythro-1-(imidazol-4-yl)glycerol 3-phosphate + 5-amino-1-(5-phospho-beta-D-ribosyl)imidazole-4-carboxamide + L-glutamate + H(+). It functions in the pathway amino-acid biosynthesis; L-histidine biosynthesis; L-histidine from 5-phospho-alpha-D-ribose 1-diphosphate: step 5/9. In terms of biological role, IGPS catalyzes the conversion of PRFAR and glutamine to IGP, AICAR and glutamate. The HisF subunit catalyzes the cyclization activity that produces IGP and AICAR from PRFAR using the ammonia provided by the HisH subunit. The polypeptide is Imidazole glycerol phosphate synthase subunit HisF (Burkholderia vietnamiensis (strain G4 / LMG 22486) (Burkholderia cepacia (strain R1808))).